We begin with the raw amino-acid sequence, 104 residues long: Large ribosomal subunit protein uL24 (104 aa).

Belongs to the universal ribosomal protein uL24 family. In terms of assembly, part of the 50S ribosomal subunit.

Functionally, one of two assembly initiator proteins, it binds directly to the 5'-end of the 23S rRNA, where it nucleates assembly of the 50S subunit. Its function is as follows. One of the proteins that surrounds the polypeptide exit tunnel on the outside of the subunit. The chain is Large ribosomal subunit protein uL24 from Afipia carboxidovorans (strain ATCC 49405 / DSM 1227 / KCTC 32145 / OM5) (Oligotropha carboxidovorans).